The sequence spans 125 residues: S-adenosylmethionine decarboxylase proenzyme (125 aa).

Serine 71 (schiff-base intermediate with substrate; via pyruvic acid) is an active-site residue. Serine 71 bears the Pyruvic acid (Ser); by autocatalysis mark. Histidine 76 serves as the catalytic Proton acceptor; for processing activity. Cysteine 91 acts as the Proton donor; for catalytic activity in catalysis.

The protein belongs to the prokaryotic AdoMetDC family. Type 1 subfamily. As to quaternary structure, heterotetramer of two alpha and two beta chains arranged as a dimer of alpha/beta heterodimers. Requires pyruvate as cofactor. Post-translationally, is synthesized initially as an inactive proenzyme. Formation of the active enzyme involves a self-maturation process in which the active site pyruvoyl group is generated from an internal serine residue via an autocatalytic post-translational modification. Two non-identical subunits are generated from the proenzyme in this reaction, and the pyruvate is formed at the N-terminus of the alpha chain, which is derived from the carboxyl end of the proenzyme. The post-translation cleavage follows an unusual pathway, termed non-hydrolytic serinolysis, in which the side chain hydroxyl group of the serine supplies its oxygen atom to form the C-terminus of the beta chain, while the remainder of the serine residue undergoes an oxidative deamination to produce ammonia and the pyruvoyl group blocking the N-terminus of the alpha chain.

The catalysed reaction is S-adenosyl-L-methionine + H(+) = S-adenosyl 3-(methylsulfanyl)propylamine + CO2. It functions in the pathway amine and polyamine biosynthesis; S-adenosylmethioninamine biosynthesis; S-adenosylmethioninamine from S-adenosyl-L-methionine: step 1/1. In terms of biological role, catalyzes the decarboxylation of S-adenosylmethionine to S-adenosylmethioninamine (dcAdoMet), the propylamine donor required for the synthesis of the polyamines spermine and spermidine from the diamine putrescine. The sequence is that of S-adenosylmethionine decarboxylase proenzyme from Pyrobaculum aerophilum (strain ATCC 51768 / DSM 7523 / JCM 9630 / CIP 104966 / NBRC 100827 / IM2).